Reading from the N-terminus, the 187-residue chain is Small monomeric GTPase RhbA (187 aa).

The GDP site is built by serine 17, valine 18, glycine 19, lysine 20, serine 21, serine 22, valine 33, and glutamate 34. Residue serine 17 coordinates GTP. Positions 19, 20, 21, 22, and 33 each coordinate GTP. Residue serine 21 coordinates Mg(2+). Residues tyrosine 36, threonine 39, asparagine 120, aspartate 123, and alanine 152 each contribute to the GTP site. The short motif at 36-44 (YYPTIENTF) is the Effector region element. Threonine 39 provides a ligand contact to Mg(2+). GDP-binding residues include asparagine 120, aspartate 123, and alanine 152. Cysteine 184 carries the S-farnesyl cysteine lipid modification.

Belongs to the small GTPase superfamily. Rheb family. Farnesylation is important for efficiently activating mTORC1-mediated signaling.

It is found in the cell membrane. It catalyses the reaction GTP + H2O = GDP + phosphate + H(+). Its activity is regulated as follows. Alternates between an inactive form bound to GDP and an active form bound to GTP. Small GTPase that acts as an allosteric activator of the canonical TOR pathway, an evolutionarily conserved central nutrient sensor that stimulates anabolic reactions and macromolecule biosynthesis to promote cellular biomass generation and growth. Plays a role in virulence. In Aspergillus fumigatus (strain ATCC MYA-4609 / CBS 101355 / FGSC A1100 / Af293) (Neosartorya fumigata), this protein is Small monomeric GTPase RhbA.